The chain runs to 137 residues: Large-conductance mechanosensitive channel (137 aa).

The Cytoplasmic portion of the chain corresponds to 1–16 (MSIIKEFREFAMRGNV). A helical transmembrane segment spans residues 17–45 (VDLAVGVIIGALFGKIVSSLVSDIIMPPL). Residues 46-74 (GLLIGGVDFKQFALFLRNAQGGIPAVVMN) lie on the Periplasmic side of the membrane. Residues 75 to 94 (YGAFIQNIFDFIIVAFAIFI) traverse the membrane as a helical segment. Over 95–137 (AIKLMNKMRCKQEDTPAAPPKPSAEEKLLAEIRDLLKEQQTRQ) the chain is Cytoplasmic.

This sequence belongs to the MscL family. Homopentamer.

The protein resides in the cell inner membrane. Channel that opens in response to stretch forces in the membrane lipid bilayer. Forms a nonselective ion channel with a conductance of about 4 nanosiemens. May participate in the regulation of osmotic pressure changes within the cell. This is Large-conductance mechanosensitive channel from Pectobacterium carotovorum (Erwinia carotovora).